A 291-amino-acid polypeptide reads, in one-letter code: Elongation factor Ts (291 aa).

Residues 78-81 form an involved in Mg(2+) ion dislocation from EF-Tu region; the sequence is TDFV.

Belongs to the EF-Ts family.

It is found in the cytoplasm. Associates with the EF-Tu.GDP complex and induces the exchange of GDP to GTP. It remains bound to the aminoacyl-tRNA.EF-Tu.GTP complex up to the GTP hydrolysis stage on the ribosome. This is Elongation factor Ts from Ureaplasma parvum serovar 3 (strain ATCC 27815 / 27 / NCTC 11736).